The sequence spans 290 residues: Nucleotide-binding protein Xfasm12_0753 (290 aa).

13 to 20 provides a ligand contact to ATP; that stretch reads GLSGSGKS. 65–68 lines the GTP pocket; that stretch reads DIRS.

This sequence belongs to the RapZ-like family.

In terms of biological role, displays ATPase and GTPase activities. In Xylella fastidiosa (strain M12), this protein is Nucleotide-binding protein Xfasm12_0753.